The primary structure comprises 289 residues: Acetyl-coenzyme A carboxylase carboxyl transferase subunit beta 2 (289 aa).

The CoA carboxyltransferase N-terminal domain occupies 25–289 (VWTKCPSCEQ…TNKSIQPEAE (265 aa)). Positions 29, 32, 48, and 51 each coordinate Zn(2+). Residues 29-51 (CPSCEQVLYRIALKENLEVCPKC) form a C4-type zinc finger.

Belongs to the AccD/PCCB family. In terms of assembly, acetyl-CoA carboxylase is a heterohexamer composed of biotin carboxyl carrier protein (AccB), biotin carboxylase (AccC) and two subunits each of ACCase subunit alpha (AccA) and ACCase subunit beta (AccD). It depends on Zn(2+) as a cofactor.

It localises to the cytoplasm. The enzyme catalyses N(6)-carboxybiotinyl-L-lysyl-[protein] + acetyl-CoA = N(6)-biotinyl-L-lysyl-[protein] + malonyl-CoA. The protein operates within lipid metabolism; malonyl-CoA biosynthesis; malonyl-CoA from acetyl-CoA: step 1/1. In terms of biological role, component of the acetyl coenzyme A carboxylase (ACC) complex. Biotin carboxylase (BC) catalyzes the carboxylation of biotin on its carrier protein (BCCP) and then the CO(2) group is transferred by the transcarboxylase to acetyl-CoA to form malonyl-CoA. In Vibrio campbellii (strain ATCC BAA-1116), this protein is Acetyl-coenzyme A carboxylase carboxyl transferase subunit beta 2.